The chain runs to 396 residues: CCA-adding enzyme (396 aa).

2 residues coordinate ATP: G32 and R35. The CTP site is built by G32 and R35. D45 and D47 together coordinate Mg(2+). Positions 116, 159, 162, 165, and 168 each coordinate ATP. CTP-binding residues include R116, D159, R162, R165, and R168.

This sequence belongs to the tRNA nucleotidyltransferase/poly(A) polymerase family. Bacterial CCA-adding enzyme type 3 subfamily. In terms of assembly, homodimer. Requires Mg(2+) as cofactor.

It catalyses the reaction a tRNA precursor + 2 CTP + ATP = a tRNA with a 3' CCA end + 3 diphosphate. The enzyme catalyses a tRNA with a 3' CCA end + 2 CTP + ATP = a tRNA with a 3' CCACCA end + 3 diphosphate. Catalyzes the addition and repair of the essential 3'-terminal CCA sequence in tRNAs without using a nucleic acid template. Adds these three nucleotides in the order of C, C, and A to the tRNA nucleotide-73, using CTP and ATP as substrates and producing inorganic pyrophosphate. tRNA 3'-terminal CCA addition is required both for tRNA processing and repair. Also involved in tRNA surveillance by mediating tandem CCA addition to generate a CCACCA at the 3' terminus of unstable tRNAs. While stable tRNAs receive only 3'-terminal CCA, unstable tRNAs are marked with CCACCA and rapidly degraded. The chain is CCA-adding enzyme from Lactobacillus delbrueckii subsp. bulgaricus (strain ATCC 11842 / DSM 20081 / BCRC 10696 / JCM 1002 / NBRC 13953 / NCIMB 11778 / NCTC 12712 / WDCM 00102 / Lb 14).